The sequence spans 392 residues: Keratin, type I cuticular Ha4 (392 aa).

The interval 1-56 (MSCESCLPALSCRTSCSSRPCVPPSCHGCTLPGACNIPANVGNCNWFCEGSFNGNE) is head. The IF rod domain occupies 56–367 (EKETMQFLND…SLLESEDCNL (312 aa)). A coil 1A region spans residues 57–91 (KETMQFLNDRLASYMEKVRQLERENAELECRIQER). Residues 92-102 (NQQQDPLVCPA) are linker 1. Residues 103–203 (YQAYFRTIEE…HEEEVNTLRC (101 aa)) are coil 1B. Residues 204–219 (QLGDRLNVEVDAAPTV) are linker 12. Residues 220–363 (DLNRVLNETR…NTYRSLLESE (144 aa)) form a coil 2 region. Residues 364–392 (DCNLPCNPCATTNASGSCCGPCGSSKRCC) are tail.

This sequence belongs to the intermediate filament family. Expressed in the hair root in the hair shaft cuticle and cortex.

This chain is Keratin, type I cuticular Ha4, found in Mus musculus (Mouse).